Reading from the N-terminus, the 901-residue chain is HTH-type transcriptional regulator MalT (901 aa).

ATP is bound at residue serine 39–threonine 46. In terms of domain architecture, HTH luxR-type spans glutamate 829–leucine 894. The segment at residues asparagine 853 to arginine 872 is a DNA-binding region (H-T-H motif).

This sequence belongs to the MalT family. In terms of assembly, monomer in solution. Oligomerizes to an active state in the presence of the positive effectors ATP and maltotriose.

Its activity is regulated as follows. Activated by ATP and maltotriose, which are both required for DNA binding. Positively regulates the transcription of the maltose regulon whose gene products are responsible for uptake and catabolism of malto-oligosaccharides. Specifically binds to the promoter region of its target genes, recognizing a short DNA motif called the MalT box. The protein is HTH-type transcriptional regulator MalT of Escherichia coli O7:K1 (strain IAI39 / ExPEC).